The sequence spans 186 residues: ATP synthase subunit delta (186 aa).

It belongs to the ATPase delta chain family. In terms of assembly, F-type ATPases have 2 components, F(1) - the catalytic core - and F(0) - the membrane proton channel. F(1) has five subunits: alpha(3), beta(3), gamma(1), delta(1), epsilon(1). F(0) has three main subunits: a(1), b(2) and c(10-14). The alpha and beta chains form an alternating ring which encloses part of the gamma chain. F(1) is attached to F(0) by a central stalk formed by the gamma and epsilon chains, while a peripheral stalk is formed by the delta and b chains.

The protein localises to the cell inner membrane. Functionally, f(1)F(0) ATP synthase produces ATP from ADP in the presence of a proton or sodium gradient. F-type ATPases consist of two structural domains, F(1) containing the extramembraneous catalytic core and F(0) containing the membrane proton channel, linked together by a central stalk and a peripheral stalk. During catalysis, ATP synthesis in the catalytic domain of F(1) is coupled via a rotary mechanism of the central stalk subunits to proton translocation. Its function is as follows. This protein is part of the stalk that links CF(0) to CF(1). It either transmits conformational changes from CF(0) to CF(1) or is implicated in proton conduction. The chain is ATP synthase subunit delta from Nitrobacter winogradskyi (strain ATCC 25391 / DSM 10237 / CIP 104748 / NCIMB 11846 / Nb-255).